The primary structure comprises 820 residues: MSDTRRRVKVYTLNEDRQWDDRGTGHVSSTYVERLKGMSLLVRAESDGSLLLESKINPNTAYQKQQDTLIVWSEAENYDLALSFQEKAGCDEIWEKICQVQGKDPSVEVTQDPIDESEEERFEEMPETSNLIDLPTCELGKLEEIADLVTSVLSSPIRREKLALALENEGYIKKLLQLFQTCENLDNTEGLHHLYEIIRGILFLNKAALFEVMFSDECIMDVVGCLEYDPALAQPKRHREFLTKTAKFKEVIPITDSELRQKIHQTYRVQYIQDVILPTPSVFEENFLSTLTSFIFFNKVEIVSMLQEDEKFLSEVFAQLTDEATDDDKRRELVNFFKEFCAFSQTLQPQNRDAFFKTLANLGILPALEIVMGMDDLQVRAAATDIFSYLVEFSPSMVREFVMQEAQQSDDDILLINVVIEQMICDSDPELGGAVQLMGLLRTLIDPENMLATANKTEKSEFLNFFYNHCMHVLTAPLLANTSEDKLEKDAVFGSIKTSTVCPDNYQTAQLLALILELLTFCVEHHTYHIKNYIMNKDLLRRVLILMNSKHTFLALCALRFMRRIIGLKDEFYNRYIIKGNLFDPVINALLDNGTRYNLLNSAIIELFEFIRVEDIKSLTSHIVENFYKALEPIEYVQTFKGLKTRYEQEKDRQSQKLSSVPSILRSNRFRRDARALEDDEELWFNEDDEEEGEAVVPPVEKTKPEDDFPEGYEKFLETKKAKELEDKENLPKRTSVGAFKFTFSHSVSAANGANSTNSKSVAAHTPPATSNGSSSKNTSLTTTVASTKGSLIGLVDYPDDEDEEEEEDASPRKRPRLGS.

The region spanning 1–100 (MSDTRRRVKV…DEIWEKICQV (100 aa)) is the WH1 domain. The span at 682–694 (ELWFNEDDEEEGE) shows a compositional bias: acidic residues. 2 disordered regions span residues 682–712 (ELWF…FPEG) and 750–820 (AANG…RLGS). A compositionally biased stretch (basic and acidic residues) spans 701-712 (EKTKPEDDFPEG). 2 stretches are compositionally biased toward polar residues: residues 750 to 761 (AANGANSTNSKS) and 768 to 790 (PATS…STKG). Residues 798–809 (YPDDEDEEEEED) show a composition bias toward acidic residues.

The protein belongs to the SMEK family. Serine/threonine-protein phosphatase 4 (PP4) occurs in different assemblies of the catalytic and one or more regulatory subunits.

In terms of biological role, regulatory subunit of serine/threonine-protein phosphatase 4 (PP4). This is Serine/threonine-protein phosphatase 4 regulatory subunit 3-A from Xenopus laevis (African clawed frog).